Reading from the N-terminus, the 416-residue chain is Serine hydroxymethyltransferase (416 aa).

(6S)-5,6,7,8-tetrahydrofolate-binding positions include Leu121 and 125–127; that span reads GHL. Lys229 carries the N6-(pyridoxal phosphate)lysine modification.

This sequence belongs to the SHMT family. As to quaternary structure, homodimer. It depends on pyridoxal 5'-phosphate as a cofactor.

It localises to the cytoplasm. It catalyses the reaction (6R)-5,10-methylene-5,6,7,8-tetrahydrofolate + glycine + H2O = (6S)-5,6,7,8-tetrahydrofolate + L-serine. It functions in the pathway one-carbon metabolism; tetrahydrofolate interconversion. Its pathway is amino-acid biosynthesis; glycine biosynthesis; glycine from L-serine: step 1/1. Catalyzes the reversible interconversion of serine and glycine with tetrahydrofolate (THF) serving as the one-carbon carrier. This reaction serves as the major source of one-carbon groups required for the biosynthesis of purines, thymidylate, methionine, and other important biomolecules. Also exhibits THF-independent aldolase activity toward beta-hydroxyamino acids, producing glycine and aldehydes, via a retro-aldol mechanism. This is Serine hydroxymethyltransferase from Dechloromonas aromatica (strain RCB).